Here is a 417-residue protein sequence, read N- to C-terminus: Guanine nucleotide-exchange factor SEC12 (417 aa).

Topologically, residues Met-1–Ser-388 are cytoplasmic. Tyr-10 carries the post-translational modification 3'-nitrotyrosine. The disordered stretch occupies residues Lys-101 to Glu-135. 2 stretches are compositionally biased toward basic and acidic residues: residues Ser-103–Pro-115 and Ala-124–Glu-135. WD repeat units follow at residues Ser-152–Glu-191, Ala-194–Gln-232, and Cys-298–Tyr-337. A helical membrane pass occupies residues Val-389–Leu-409. The Lumenal portion of the chain corresponds to Gln-410–Leu-417.

Interacts with SAR1B (GDP-bound form). Interacts with MIA2; recruits PREB to endoplasmic reticulum exit sites. Interacts with CIDEB; facilitating loading of SCAP-SREBP into COPII vesicles.

It localises to the endoplasmic reticulum membrane. Its subcellular location is the nucleus. Functionally, guanine nucleotide exchange factor (GEF) that regulates the assembly of the coat protein complex II/COPII in endoplasmic reticulum (ER) to Golgi vesicle-mediated transport. Selectively activates SAR1A and SAR1B by promoting the exchange of guanosine diphosphate (GDP) for guanosine triphosphate (GTP) in these small GTPases. In their activated GTP-bound state, SAR1A and SAR1B insert into the membrane of the endoplasmic reticulum where they recruit the remainder of the coat protein complex II/COPII which is responsible for both the sorting of proteins and the deformation and budding of membranes into vesicles destined to the Golgi. In terms of biological role, was first identified based on its probable role in the regulation of pituitary gene transcription. Binds to the prolactin gene (PRL) promoter and seems to activate transcription. This Rattus norvegicus (Rat) protein is Guanine nucleotide-exchange factor SEC12.